Here is a 361-residue protein sequence, read N- to C-terminus: Chorismate synthase (361 aa).

Positions 48 and 54 each coordinate NADP(+). FMN-binding positions include 125–127 (RSS), 238–239 (NA), Gly-278, 293–297 (KPTSS), and Arg-319.

This sequence belongs to the chorismate synthase family. In terms of assembly, homotetramer. Requires FMNH2 as cofactor.

The enzyme catalyses 5-O-(1-carboxyvinyl)-3-phosphoshikimate = chorismate + phosphate. Its pathway is metabolic intermediate biosynthesis; chorismate biosynthesis; chorismate from D-erythrose 4-phosphate and phosphoenolpyruvate: step 7/7. Its function is as follows. Catalyzes the anti-1,4-elimination of the C-3 phosphate and the C-6 proR hydrogen from 5-enolpyruvylshikimate-3-phosphate (EPSP) to yield chorismate, which is the branch point compound that serves as the starting substrate for the three terminal pathways of aromatic amino acid biosynthesis. This reaction introduces a second double bond into the aromatic ring system. This chain is Chorismate synthase, found in Escherichia coli (strain SE11).